Here is a 117-residue protein sequence, read N- to C-terminus: Large ribosomal subunit protein bL19 (117 aa).

It belongs to the bacterial ribosomal protein bL19 family.

Functionally, this protein is located at the 30S-50S ribosomal subunit interface and may play a role in the structure and function of the aminoacyl-tRNA binding site. This Shewanella amazonensis (strain ATCC BAA-1098 / SB2B) protein is Large ribosomal subunit protein bL19.